Here is a 288-residue protein sequence, read N- to C-terminus: MGYNEQERAFIEWYPRGYGVGFKVKRRLFETQTEYQRLEIYETEGFGKLLVLDGTVQLVEVGEESYHEVLVHPVMLAHPNPRKVLVIGGGDGGTLREVLRHDTVEKAIMVEIDEGVVEASYLYLDVAKDLLDRLIKKEEPRAELIIGDGVKYLRETDERFDVIIVDSTDPVGPAKLLFSEEFYRDAYEKLNEKGLYVTQAGSVYLFTNELLDAYKAMKKVFDRVYYFSFPVIGYASPWSFLVGVKGDVDFTRIDLERAKKLDLYYYDPERHETLFQMPRYVRKLLEGQ.

The PABS domain occupies 11 to 245 (IEWYPRGYGV…SPWSFLVGVK (235 aa)). Q36 is a binding site for S-methyl-5'-thioadenosine. Spermidine is bound by residues H67 and D91. S-methyl-5'-thioadenosine-binding positions include E111 and 148–149 (DG). D166 functions as the Proton acceptor in the catalytic mechanism. Position 166-169 (166-169 (DSTD)) interacts with spermidine. Residue P173 participates in S-methyl-5'-thioadenosine binding.

This sequence belongs to the spermidine/spermine synthase family. As to quaternary structure, homodimer or homotetramer.

Its subcellular location is the cytoplasm. The catalysed reaction is S-adenosyl 3-(methylsulfanyl)propylamine + agmatine = N(1)-(3-aminopropyl)agmatine + S-methyl-5'-thioadenosine + H(+). The enzyme catalyses S-adenosyl 3-(methylsulfanyl)propylamine + putrescine = S-methyl-5'-thioadenosine + spermidine + H(+). It carries out the reaction cadaverine + S-adenosyl 3-(methylsulfanyl)propylamine = aminopropylcadaverine + S-methyl-5'-thioadenosine + H(+). It functions in the pathway amine and polyamine biosynthesis; spermidine biosynthesis; spermidine from putrescine: step 1/1. Its function is as follows. Involved in the biosynthesis of polyamines which are thought to support the growth of thermophilic microorganisms under high-temperature conditions. It seems that long-chain and branched-chain of polyamines effectively stabilize DNA and RNA, respectively. Catalyzes the irreversible transfer of a propylamine group from the amino donor S-adenosylmethioninamine (decarboxy-AdoMet) to agmatine to yield N1-aminopropylagmatine. It can also use cadaverine (1,5-diaminopentane) and putrescine (1,4-diaminobutane) as substrate with a lower activity than that of agmatine. The reaction involves a nucleophilic attack on the C-3 methylene of the propylamine moiety adjacent to the positively charged sulfur of decarboxy-AdoMet. This Thermococcus kodakarensis (strain ATCC BAA-918 / JCM 12380 / KOD1) (Pyrococcus kodakaraensis (strain KOD1)) protein is Polyamine aminopropyltransferase.